We begin with the raw amino-acid sequence, 335 residues long: MAGSPTCLTLIYILWQLTGSAASGPVKELVGSVGGAVTFPLKSKVKQVDSIVWTFNTTPLVTIQPEGGTIIVTQNRNRERVDFPDGGYSLKLSKLKKNDSGIYYVGIYSSSLQQPSTQEYVLHVYEHLSKPKVTMGLQSNKNGTCVTNLTCCMEHGEEDVIYTWKALGQAANESHNGSILPISWRWGESDMTFICVARNPVSRNFSSPILARKLCEGAADDPDSSMVLLCLLLVPLLLSLFVLGLFLWFLKRERQEEYIEEKKRVDICRETPNICPHSGENTEYDTIPHTNRTILKEDPANTVYSTVEIPKKMENPHSLLTMPDTPRLFAYENVI.

Positions 1–22 are cleaved as a signal peptide; sequence MAGSPTCLTLIYILWQLTGSAA. Positions 23–124 constitute an Ig-like V-type domain; sequence SGPVKELVGS…PSTQEYVLHV (102 aa). The Extracellular segment spans residues 23 to 226; the sequence is SGPVKELVGS…GAADDPDSSM (204 aa). Residues Asn-98, Asn-142, Asn-148, Asn-172, Asn-176, and Asn-204 are each glycosylated (N-linked (GlcNAc...) asparagine). Residues 131–206 enclose the Ig-like C2-type domain; that stretch reads PKVTMGLQSN…ARNPVSRNFS (76 aa). Intrachain disulfides connect Cys-145–Cys-215 and Cys-151–Cys-195. A helical membrane pass occupies residues 227–247; the sequence is VLLCLLLVPLLLSLFVLGLFL. Over 248–335 the chain is Cytoplasmic; sequence WFLKRERQEE…PRLFAYENVI (88 aa). Positions 278–296 are interaction with FYN when phosphorylated at Tyr-284; the sequence is SGENTEYDTIPHTNRTILK. Positions 302–307 match the ITSM motif; that stretch reads TVYSTV.

As to quaternary structure, isoform 1 binds to SH2D1A when its cytoplasmic tail is phosphorylated in the presence of FYN (in vitro); low affinity binding, the physiological relevance of the interaction is questioned. Interacts with SH2D1B; in NK cells. Interacts (via ITSM phosphorylated on Tyr-302) with SH2D1B, PTPN6/SHP-1, PTPN11/SHP-2, INPP5D/SHIP1, CSK and FYN. Expressed in spleen, lymph node, peripheral blood leukocytes, bone marrow, small intestine, stomach, appendix, lung and trachea. Expression was detected in NK cells, activated B-cells, NK-cell line but not in promyelocytic, B-, or T-cell lines. Expressed in monocytes. Isoform 3 is expressed at much lower level than isoform 1.

Its subcellular location is the membrane. Self-ligand receptor of the signaling lymphocytic activation molecule (SLAM) family. SLAM receptors triggered by homo- or heterotypic cell-cell interactions are modulating the activation and differentiation of a wide variety of immune cells and thus are involved in the regulation and interconnection of both innate and adaptive immune response. Activities are controlled by presence or absence of small cytoplasmic adapter proteins, SH2D1A/SAP and/or SH2D1B/EAT-2. Isoform 1 mediates NK cell activation through a SH2D1A-independent extracellular signal-regulated ERK-mediated pathway. Positively regulates NK cell functions by a mechanism dependent on phosphorylated SH2D1B. Downstream signaling implicates PLCG1, PLCG2 and PI3K. In addition to heterotypic NK cells-target cells interactions also homotypic interactions between NK cells may contribute to activation. However, in the absence of SH2D1B, inhibits NK cell function. Also acts inhibitory in T-cells. May play a role in lymphocyte adhesion. In LPS-activated monocytes negatively regulates production of pro-inflammatory cytokines. Its function is as follows. Isoform 3 does not mediate any NK cell activation. The sequence is that of SLAM family member 7 (SLAMF7) from Homo sapiens (Human).